The following is a 365-amino-acid chain: Prostaglandin E2 receptor EP3 subtype (365 aa).

The segment at Met-1–Asp-22 is disordered. The Extracellular portion of the chain corresponds to Met-1 to Ala-30. Residues Ala-13–Asp-22 show a composition bias toward polar residues. Residue Asn-16 is glycosylated (N-linked (GlcNAc...) asparagine). A helical transmembrane segment spans residues Phe-31–Arg-55. The Cytoplasmic segment spans residues Arg-56 to Cys-68. The helical transmembrane segment at Ile-69–Leu-89 threads the bilayer. The Extracellular portion of the chain corresponds to Val-90–Thr-108. Cys-107 and Cys-184 are disulfide-bonded. A helical membrane pass occupies residues Phe-109–Val-130. The Cytoplasmic segment spans residues Glu-131–Thr-151. Residues Pro-152 to Gly-173 traverse the membrane as a helical segment. Residues Arg-174 to Ser-203 lie on the Extracellular side of the membrane. Asn-193 carries an N-linked (GlcNAc...) asparagine glycan. The chain crosses the membrane as a helical span at residues Val-204–Ile-229. Residues Lys-230–Gln-259 lie on the Cytoplasmic side of the membrane. The chain crosses the membrane as a helical span at residues Leu-260–Phe-283. The Extracellular segment spans residues Asn-284–Ser-303. Residues Phe-304 to Leu-325 form a helical membrane-spanning segment. Over Arg-326 to Arg-365 the chain is Cytoplasmic.

Belongs to the G-protein coupled receptor 1 family. As to quaternary structure, interacts (via C-terminus) with MKLN1. Post-translationally, ligand binding is affected by cAMP-dependent phosphorylation in brain membranes. In terms of tissue distribution, detected in platelets. Kidney, uterus, and mastocytoma cells, and in a lesser amount in brain, thymus, lung, heart, stomach and spleen.

It localises to the cell membrane. Receptor for prostaglandin E2 (PGE2). Required for normal development of fever in response to pyrinogens, including IL1B, prostaglandin E2 and bacterial lipopolysaccharide (LPS). Required for normal potentiation of platelet aggregation by prostaglandin E2, and thus plays a role in the regulation of blood coagulation. Required for increased HCO3(-) secretion in the duodenum in response to mucosal acidification, and thereby contributes to the protection of the mucosa against acid-induced ulceration. Not required for normal kidney function, normal urine volume and osmolality. In terms of biological role, receptor for prostaglandin E2 (PGE2); ligand binding activates a signaling cascade via G(i) proteins that leads to inhibition of adenylate cyclase. Shows high agonist-independent constitutive inhibition of adenylate cyclase. Its function is as follows. Receptor for prostaglandin E2 (PGE2); ligand binding activates a signaling cascade via G(i) proteins that leads to inhibition of adenylate cyclase. Requires much higher ligand concentrations than isoform Alpha for activation. Does not display agonist-independent constitutive inhibition of adenylate cyclase. Functionally, receptor for prostaglandin E2 (PGE2); ligand binding can activate several distinct signaling cascades, resulting in activation or inhibition of adenylate cyclase. The chain is Prostaglandin E2 receptor EP3 subtype (Ptger3) from Mus musculus (Mouse).